Consider the following 889-residue polypeptide: Translation initiation factor IF-2 (889 aa).

The tract at residues 158-296 is disordered; that stretch reads LKEKQEKRRQ…KYKSDELQSQ (139 aa). A compositionally biased stretch (low complexity) spans 209 to 228; it reads AAATPATSTAPATTSTTAAT. A compositionally biased stretch (basic and acidic residues) spans 238 to 270; that stretch reads VKPEEKGEKKKKPTKQDAWKDEPVKRREPKARG. Residues 391 to 560 enclose the tr-type G domain; the sequence is PRAPVVTVMG…LLQAEVLELK (170 aa). Residues 400-407 form a G1 region; it reads GHVDHGKT. 400-407 contributes to the GTP binding site; it reads GHVDHGKT. Residues 425–429 form a G2 region; it reads GITQH. Positions 446–449 are G3; the sequence is DTPG. Residues 446 to 450 and 500 to 503 contribute to the GTP site; these read DTPGH and NKMD. The G4 stretch occupies residues 500 to 503; it reads NKMD. Positions 536 to 538 are G5; it reads SAK.

Belongs to the TRAFAC class translation factor GTPase superfamily. Classic translation factor GTPase family. IF-2 subfamily.

It localises to the cytoplasm. Functionally, one of the essential components for the initiation of protein synthesis. Protects formylmethionyl-tRNA from spontaneous hydrolysis and promotes its binding to the 30S ribosomal subunits. Also involved in the hydrolysis of GTP during the formation of the 70S ribosomal complex. This chain is Translation initiation factor IF-2, found in Nitrosomonas europaea (strain ATCC 19718 / CIP 103999 / KCTC 2705 / NBRC 14298).